The primary structure comprises 356 residues: Phosphate acyltransferase (356 aa).

It belongs to the PlsX family. As to quaternary structure, homodimer. Probably interacts with PlsY.

Its subcellular location is the cytoplasm. It carries out the reaction a fatty acyl-[ACP] + phosphate = an acyl phosphate + holo-[ACP]. It participates in lipid metabolism; phospholipid metabolism. Functionally, catalyzes the reversible formation of acyl-phosphate (acyl-PO(4)) from acyl-[acyl-carrier-protein] (acyl-ACP). This enzyme utilizes acyl-ACP as fatty acyl donor, but not acyl-CoA. The protein is Phosphate acyltransferase of Shigella sonnei (strain Ss046).